The chain runs to 426 residues: Tryptophan--tRNA ligase (426 aa).

Positions 66–74 (PSGEMHLGN) match the 'HIGH' region motif. The 'KMSKS' region motif lies at 314–318 (KMSSS).

This sequence belongs to the class-I aminoacyl-tRNA synthetase family.

It localises to the cytoplasm. It catalyses the reaction tRNA(Trp) + L-tryptophan + ATP = L-tryptophyl-tRNA(Trp) + AMP + diphosphate + H(+). The protein is Tryptophan--tRNA ligase of Thermoplasma acidophilum (strain ATCC 25905 / DSM 1728 / JCM 9062 / NBRC 15155 / AMRC-C165).